The chain runs to 147 residues: UPF0306 protein YhbP (147 aa).

It belongs to the UPF0306 family.

This chain is UPF0306 protein YhbP, found in Salmonella choleraesuis (strain SC-B67).